A 60-amino-acid polypeptide reads, in one-letter code: Conotoxin Cal6.20 (60 aa).

A signal peptide spans 1 to 22; that stretch reads MKLTCVLIVAVLILTACQVIAA. Disulfide bonds link Cys-32-Cys-42, Cys-35-Cys-48, and Cys-41-Cys-55.

It belongs to the conotoxin O1 superfamily. As to expression, expressed by the venom duct.

The protein resides in the secreted. Functionally, probable neurotoxin. This chain is Conotoxin Cal6.20, found in Californiconus californicus (California cone).